The following is a 400-amino-acid chain: Endophilin-B2 (400 aa).

Met1 carries the post-translational modification N-acetylmethionine. Positions 1–27 (MDFNMKKLASDAGIFFTRAVQFTEEKF) are membrane-binding amphipathic helix. Ser10 is subject to Phosphoserine. Positions 24–287 (EEKFGQAEKT…LGSSQGAIFP (264 aa)) constitute a BAR domain. The stretch at 205–234 (SASALWNDEVDKAEQELRVAQTEFDRQAEV) forms a coiled coil. One can recognise an SH3 domain in the interval 340 to 400 (SGTRKARVLY…VPVTYLELLS (61 aa)). Ser400 is subject to Phosphoserine.

This sequence belongs to the endophilin family. Homodimer, and heterodimer with SH3GLB1.

Its subcellular location is the cytoplasm. The chain is Endophilin-B2 (Sh3glb2) from Mus musculus (Mouse).